The following is a 938-amino-acid chain: Translation initiation factor IF-2 (938 aa).

The segment covering 57–205 (DKSKKVASKE…PKSEETKSEE (149 aa)) has biased composition (basic and acidic residues). Positions 57–350 (DKSKKVASKE…RSADDLAQQE (294 aa)) are disordered. Acidic residues predominate over residues 206–215 (TTEGGESEEK). The span at 248–259 (KKEEKKEDDKKD) shows a compositional bias: basic and acidic residues. Basic residues-rich tracts occupy residues 260–270 (KDRRKKRRRRI) and 285–296 (GAKKGGRTRSKP). Positions 297 to 319 (ITKEEPTEEEVQKQVRETLEKLQ) are enriched in basic and acidic residues. Residues 323–333 (SKGKGAKYRRQ) show a composition bias toward basic residues. Over residues 334–344 (KRDEHRQRSAD) the composition is skewed to basic and acidic residues. The 169-residue stretch at 434-602 (TRAPIVTVMG…KVLLEAEILE (169 aa)) folds into the tr-type G domain. The segment at 443–450 (GHVDHGKT) is G1. Position 443–450 (443–450 (GHVDHGKT)) interacts with GTP. Residues 468-472 (GITQH) are G2. The interval 490 to 493 (DTPG) is G3. Residues 490–494 (DTPGH) and 544–547 (NKSD) contribute to the GTP site. The tract at residues 544 to 547 (NKSD) is G4. The G5 stretch occupies residues 580–582 (SAK).

Belongs to the TRAFAC class translation factor GTPase superfamily. Classic translation factor GTPase family. IF-2 subfamily.

The protein localises to the cytoplasm. One of the essential components for the initiation of protein synthesis. Protects formylmethionyl-tRNA from spontaneous hydrolysis and promotes its binding to the 30S ribosomal subunits. Also involved in the hydrolysis of GTP during the formation of the 70S ribosomal complex. In Christiangramia forsetii (strain DSM 17595 / CGMCC 1.15422 / KT0803) (Gramella forsetii), this protein is Translation initiation factor IF-2.